A 548-amino-acid chain; its full sequence is Chaperonin GroEL (548 aa).

ATP-binding positions include 30–33, lysine 51, 87–91, glycine 415, 479–481, and aspartate 495; these read TLGP, DGTTT, and NAA.

The protein belongs to the chaperonin (HSP60) family. As to quaternary structure, forms a cylinder of 14 subunits composed of two heptameric rings stacked back-to-back. Interacts with the co-chaperonin GroES.

Its subcellular location is the cytoplasm. It carries out the reaction ATP + H2O + a folded polypeptide = ADP + phosphate + an unfolded polypeptide.. Together with its co-chaperonin GroES, plays an essential role in assisting protein folding. The GroEL-GroES system forms a nano-cage that allows encapsulation of the non-native substrate proteins and provides a physical environment optimized to promote and accelerate protein folding. The sequence is that of Chaperonin GroEL from Proteus mirabilis (strain HI4320).